We begin with the raw amino-acid sequence, 241 residues long: Endodeoxyribonuclease NucC (241 aa).

Residues Asp73, Glu104, and Lys106 contribute to the active site. Residues Asp73 and Glu104 each contribute to the Mg(2+) site.

The protein belongs to the NucC endonuclease family. Self-oligomerizes. Forms homotrimers; in the presence of cAAA the trimers associate face-to-face to form homohexamers. The 2 cAAA-binding sites are on the exterior of the hexamer at the three-way junction, there are maximally 2 cyclic nucleotides per hexamer. The cofactor is Mg(2+).

Its activity is regulated as follows. Activated by cAAA and to a lesser extent cAA and cAAG; cAAA and cAA are products of its cognate CD-NTase. Cyclic nucleotide binding causes hexamerization. Cyclic nucleotide binding causes a series of shifts that enclose the cAAA molecule, enable hexamer formation and juxtapose pairs of active sites to allow dsDNA cleavage. Functionally, effector DNase of a CBASS antivirus system. CBASS (cyclic oligonucleotide-based antiphage signaling system) provides immunity against bacteriophage. The CD-NTase protein synthesizes cyclic nucleotides in response to infection; these serve as specific second messenger signals. The signals activate a diverse range of effectors, leading to bacterial cell death and thus abortive phage infection. A type III-C(AAA) CBASS system. A cyclic nucleotide-activated dsDNase. In the presence of 3',3',3'-cyclic AMP-AMP-AMP (cAAA), and to a lesser extent 3',3',3'-cyclic AMP-AMP-GMP (cAAG) and cyclic-di-AMP (c-di-AMP), endonucleolytically degrades dsDNA. Binds one cAAA in a pocket on one surface of the trimer; cAAA binding promotes hexamerization, which is necessary for nuclease activation. Also binds c-diAMP or linear di-AMP with lower affinity. The nuclease digests dsDNA to about 50 bp lengths with a 2-base 3' overhang and a consensus recognition site of 5'-Axx|T-3'. DNA has been modeled to contact a pair of juxtaposed active sites (one from each layer of the hexamer), accounting for cleavage on both strands and the 2-base overhang. Its function is as follows. Protects E.coli strain JP313 against bacteriophage lambda cI- infection. When the cdnC-cap7-cap6-nucC operon is transformed into a susceptible strain it confers bacteriophage immunity. Mutations in the sensor (Cap7 also called HORMA) or effector proteins (CdnC, NucC) but not the disassembly protein (Cap6 also called Trip13) no longer confer immunity. The presence of the intact operon leads to culture collapse and cell death which occurs before the phage has finished its replication cycle, thus protecting non-infected bacteria by aborting the phage infection and preventing its propagation. The protein is Endodeoxyribonuclease NucC of Escherichia coli (strain MS 115-1).